The primary structure comprises 300 residues: uncharacterized protein (300 aa).

Solcar repeat units follow at residues 10–101 (ESQT…VKDF), 119–199 (GKAI…AKEY), and 212–294 (FQNF…LIPF). 6 helical membrane passes run 16–36 (IVGSASAGILELSLFHPVDTI), 70–86 (ATSLFPGLGYAACYKIV), 121–141 (AIMHATAGSIVGIGEIFLLPL), 178–198 (TAARNAPGSFALFGGNAFAKE), 215–235 (FFTSIAGASASLIVSAPLDVI), and 275–295 (LTTGPKLVFSFTMAQTLIPFF).

It belongs to the mitochondrial carrier (TC 2.A.29) family.

Its subcellular location is the mitochondrion inner membrane. This is an uncharacterized protein from Schizosaccharomyces pombe (strain 972 / ATCC 24843) (Fission yeast).